Consider the following 388-residue polypeptide: MGKKAIQFGGGNIGRGFVAEFLHEAGYEVVFIDVVDKIIDALKSTPSYEVSEVSEEGEKTKTITNYRAINSKTNEEDVVKEIGTADVVTCAVGPNVLKFIAPVIAKGIDARTASKPVAVIACENAIGATDTLRGFIEQHTDKDRLSSMSERARFANSAIDRIVPNQPPNAGLNVRIEKFYEWTVEQTPFGEFGHPDIPAIHWVDDLKPYIERKLFTVNTGHATTAYYGHVRGKKMIADALADAEIRKIVHNVLEQTAMLITTKHEITEQEQNEYVDTIVKRMSNPFLEDNVERVGRAPLRKLSRNERFIGPASQLAEKGLPFDALLGSIEMALRFQNVPGDEESAELAKILKEMSADEATGKLTGLEKSHPLYKPVQNVVAKVQKDSK.

NAD(+) is bound at residue 5–16 (AIQFGGGNIGRG). The active site involves lysine 213.

The protein belongs to the mannitol dehydrogenase family. In terms of assembly, monomer.

The catalysed reaction is D-mannitol 1-phosphate + NAD(+) = beta-D-fructose 6-phosphate + NADH + H(+). Its function is as follows. Catalyzes the NAD(H)-dependent interconversion of D-fructose 6-phosphate and D-mannitol 1-phosphate in the mannitol metabolic pathway. This chain is Mannitol-1-phosphate 5-dehydrogenase (mpdA), found in Neosartorya fischeri (strain ATCC 1020 / DSM 3700 / CBS 544.65 / FGSC A1164 / JCM 1740 / NRRL 181 / WB 181) (Aspergillus fischerianus).